The primary structure comprises 230 residues: 7-cyano-7-deazaguanine synthase (230 aa).

10–20 (LSGGLDSATTA) provides a ligand contact to ATP. Zn(2+) is bound by residues Cys-191, Cys-199, Cys-202, and Cys-205.

This sequence belongs to the QueC family. Zn(2+) is required as a cofactor.

The enzyme catalyses 7-carboxy-7-deazaguanine + NH4(+) + ATP = 7-cyano-7-deazaguanine + ADP + phosphate + H2O + H(+). Its pathway is purine metabolism; 7-cyano-7-deazaguanine biosynthesis. Functionally, catalyzes the ATP-dependent conversion of 7-carboxy-7-deazaguanine (CDG) to 7-cyano-7-deazaguanine (preQ(0)). The sequence is that of 7-cyano-7-deazaguanine synthase from Gloeothece citriformis (strain PCC 7424) (Cyanothece sp. (strain PCC 7424)).